A 597-amino-acid polypeptide reads, in one-letter code: Elongation factor 4 (597 aa).

The tr-type G domain occupies 2–184 (DHIRNFSIIA…SLIAKVPPPK (183 aa)). Residues 14 to 19 (DHGKST) and 131 to 134 (NKID) each bind GTP.

This sequence belongs to the TRAFAC class translation factor GTPase superfamily. Classic translation factor GTPase family. LepA subfamily.

The protein resides in the cell inner membrane. The enzyme catalyses GTP + H2O = GDP + phosphate + H(+). Required for accurate and efficient protein synthesis under certain stress conditions. May act as a fidelity factor of the translation reaction, by catalyzing a one-codon backward translocation of tRNAs on improperly translocated ribosomes. Back-translocation proceeds from a post-translocation (POST) complex to a pre-translocation (PRE) complex, thus giving elongation factor G a second chance to translocate the tRNAs correctly. Binds to ribosomes in a GTP-dependent manner. The chain is Elongation factor 4 from Burkholderia cenocepacia (strain HI2424).